Reading from the N-terminus, the 341-residue chain is L-threonine 3-dehydrogenase (341 aa).

Position 38 (cysteine 38) interacts with Zn(2+). Active-site charge relay system residues include threonine 40 and histidine 43. Positions 63, 64, 93, 96, 99, and 107 each coordinate Zn(2+). NAD(+)-binding positions include isoleucine 175, aspartate 195, arginine 200, 262-264 (LGI), and 286-287 (IY).

Belongs to the zinc-containing alcohol dehydrogenase family. Homotetramer. The cofactor is Zn(2+).

The protein resides in the cytoplasm. It carries out the reaction L-threonine + NAD(+) = (2S)-2-amino-3-oxobutanoate + NADH + H(+). It functions in the pathway amino-acid degradation; L-threonine degradation via oxydo-reductase pathway; glycine from L-threonine: step 1/2. In terms of biological role, catalyzes the NAD(+)-dependent oxidation of L-threonine to 2-amino-3-ketobutyrate. The polypeptide is L-threonine 3-dehydrogenase (Yersinia pseudotuberculosis serotype O:1b (strain IP 31758)).